A 371-amino-acid polypeptide reads, in one-letter code: Putative glutamate--cysteine ligase 2 (371 aa).

Belongs to the glutamate--cysteine ligase type 2 family. YbdK subfamily. Homodimer.

The catalysed reaction is L-cysteine + L-glutamate + ATP = gamma-L-glutamyl-L-cysteine + ADP + phosphate + H(+). Its function is as follows. ATP-dependent carboxylate-amine ligase which exhibits weak glutamate--cysteine ligase activity. The protein is Putative glutamate--cysteine ligase 2 of Klebsiella pneumoniae (strain 342).